The primary structure comprises 251 residues: Imidazole glycerol phosphate synthase subunit HisF (251 aa).

Active-site residues include Asp11 and Asp130.

Belongs to the HisA/HisF family. As to quaternary structure, heterodimer of HisH and HisF.

Its subcellular location is the cytoplasm. It catalyses the reaction 5-[(5-phospho-1-deoxy-D-ribulos-1-ylimino)methylamino]-1-(5-phospho-beta-D-ribosyl)imidazole-4-carboxamide + L-glutamine = D-erythro-1-(imidazol-4-yl)glycerol 3-phosphate + 5-amino-1-(5-phospho-beta-D-ribosyl)imidazole-4-carboxamide + L-glutamate + H(+). The protein operates within amino-acid biosynthesis; L-histidine biosynthesis; L-histidine from 5-phospho-alpha-D-ribose 1-diphosphate: step 5/9. In terms of biological role, IGPS catalyzes the conversion of PRFAR and glutamine to IGP, AICAR and glutamate. The HisF subunit catalyzes the cyclization activity that produces IGP and AICAR from PRFAR using the ammonia provided by the HisH subunit. The protein is Imidazole glycerol phosphate synthase subunit HisF of Chlorobium phaeobacteroides (strain BS1).